The sequence spans 1761 residues: Lysine-specific demethylase 3B (1761 aa).

N-acetylalanine is present on Ala-2. The tract at residues Asp-253–Phe-346 is disordered. Over residues Ala-298–Val-309 the composition is skewed to basic and acidic residues. Lys-361 carries the N6-acetyllysine modification. Disordered regions lie at residues Gln-370–Leu-394 and Asp-438–Leu-496. Composition is skewed to polar residues over residues Ala-380–Thr-392, Ser-453–Ala-468, and Pro-477–Val-495. 4 positions are modified to phosphoserine: Ser-492, Ser-546, Ser-556, and Ser-560. The tract at residues Arg-572 to Pro-603 is disordered. Thr-614 carries the post-translational modification Phosphothreonine. The disordered stretch occupies residues Gly-714 to Leu-762. A compositionally biased stretch (polar residues) spans Gly-723–Pro-745. Ser-766, Ser-773, Ser-778, and Ser-779 each carry phosphoserine. Residue Lys-788 forms a Glycyl lysine isopeptide (Lys-Gly) (interchain with G-Cter in SUMO2) linkage. Ser-798 bears the Phosphoserine mark. Positions Ala-805–Gln-827 are disordered. The segment at Cys-1031–Cys-1056 adopts a C6-type zinc-finger fold. A compositionally biased stretch (polar residues) spans Gly-1142–Phe-1161. The disordered stretch occupies residues Gly-1142–Ser-1220. The span at Glu-1174–Lys-1193 shows a compositional bias: basic and acidic residues. The span at Thr-1194–Glu-1204 shows a compositional bias: polar residues. Phosphoserine is present on residues Ser-1253 and Ser-1259. Positions Leu-1293 to Leu-1297 match the LXXLL motif motif. In terms of domain architecture, JmjC spans Met-1498–Arg-1721. 3 residues coordinate Fe cation: His-1560, Asp-1562, and His-1689.

It belongs to the JHDM2 histone demethylase family. Fe(2+) serves as cofactor. As to expression, ubiquitous. Highly expressed in placenta, skeletal muscle, kidney, heart and liver.

Its subcellular location is the nucleus. The catalysed reaction is N(6),N(6)-dimethyl-L-lysyl(9)-[histone H3] + 2 2-oxoglutarate + 2 O2 = L-lysyl(9)-[histone H3] + 2 formaldehyde + 2 succinate + 2 CO2. Histone demethylase that specifically demethylates 'Lys-9' of histone H3, thereby playing a central role in histone code. Demethylation of Lys residue generates formaldehyde and succinate. May have tumor suppressor activity. The polypeptide is Lysine-specific demethylase 3B (KDM3B) (Homo sapiens (Human)).